Consider the following 139-residue polypeptide: Antitoxin HicB 2 (139 aa).

Positions Met-87–Val-137 constitute an HTH cro/C1-type domain. The H-T-H motif DNA-binding region spans Glu-96 to Ser-113.

This sequence belongs to the HicB antitoxin family. Probably forms a complex with the probable mRNA interferase HicA2 (its cognate toxin); when complexed with HicA inhibits the toxin activity.

Its function is as follows. Antitoxin component of a type II toxin-antitoxin (TA) system. Functions as an mRNA interferase antitoxin preventing effects of the HicA 2 toxin. This Photorhabdus laumondii subsp. laumondii (strain DSM 15139 / CIP 105565 / TT01) (Photorhabdus luminescens subsp. laumondii) protein is Antitoxin HicB 2 (hicB2).